The sequence spans 168 residues: Co-chaperone protein HscB homolog (168 aa).

One can recognise a J domain in the interval 5-77 (DYFSLFGLPS…MLRARYLCES (73 aa)).

It belongs to the HscB family. In terms of assembly, interacts with HscA and stimulates its ATPase activity.

In terms of biological role, co-chaperone involved in the maturation of iron-sulfur cluster-containing proteins. Seems to help targeting proteins to be folded toward HscA. The sequence is that of Co-chaperone protein HscB homolog from Bordetella avium (strain 197N).